The primary structure comprises 595 residues: UvrABC system protein C (595 aa).

The 78-residue stretch at 14–91 (DSPGCYIHKD…IQENKPKYNI (78 aa)) folds into the GIY-YIG domain. The UVR domain occupies 196–231 (DKIVNELRDKMTKASELMEFERAAEYRDLIEGIGLL).

It belongs to the UvrC family. As to quaternary structure, interacts with UvrB in an incision complex.

Its subcellular location is the cytoplasm. Functionally, the UvrABC repair system catalyzes the recognition and processing of DNA lesions. UvrC both incises the 5' and 3' sides of the lesion. The N-terminal half is responsible for the 3' incision and the C-terminal half is responsible for the 5' incision. The sequence is that of UvrABC system protein C from Streptococcus mutans serotype c (strain ATCC 700610 / UA159).